Reading from the N-terminus, the 242-residue chain is Type III pantothenate kinase (242 aa).

ATP is bound at residue 7–14 (DLGNSRFK). Substrate-binding positions include tyrosine 91 and 98–101 (GVDR). The active-site Proton acceptor is aspartate 100. Residue threonine 121 coordinates ATP. Threonine 171 contacts substrate.

The protein belongs to the type III pantothenate kinase family. As to quaternary structure, homodimer. The cofactor is NH4(+). Requires K(+) as cofactor.

It localises to the cytoplasm. The enzyme catalyses (R)-pantothenate + ATP = (R)-4'-phosphopantothenate + ADP + H(+). It functions in the pathway cofactor biosynthesis; coenzyme A biosynthesis; CoA from (R)-pantothenate: step 1/5. Catalyzes the phosphorylation of pantothenate (Pan), the first step in CoA biosynthesis. The sequence is that of Type III pantothenate kinase from Xylella fastidiosa (strain M23).